Reading from the N-terminus, the 499-residue chain is Glutelin type-A 1 (499 aa).

Residues 1–24 (MASINRPIVFFTVCLFLLCNGSLA) form the signal peptide. 2 cysteine pairs are disulfide-bonded: C46–C79 and C122–C313. Cupin type-1 domains lie at 51 to 248 (LQAF…QVAR) and 319 to 468 (QNID…EEAQ).

The protein belongs to the 11S seed storage protein (globulins) family. In terms of assembly, hexamer; each subunit is composed of an acidic and a basic chain derived from a single precursor and linked by a disulfide bond.

In terms of biological role, seed storage protein. The polypeptide is Glutelin type-A 1 (GLUA1) (Oryza sativa subsp. japonica (Rice)).